Reading from the N-terminus, the 100-residue chain is MFYFISRKFYDQFKYGILTDKTNKLLKNNVYTFDVDIQMSKRQFKDLIETAFSVKITSVNSYVKSSKYYRSNNFEGMKKYYKRMFIKLNDLETIPFFSCL.

This sequence belongs to the universal ribosomal protein uL23 family. As to quaternary structure, part of the 50S ribosomal subunit.

It is found in the plastid. The protein resides in the chloroplast. Its function is as follows. Binds to 23S rRNA. This Euglena gracilis protein is Large ribosomal subunit protein uL23c (rpl23).